A 546-amino-acid chain; its full sequence is Chaperonin GroEL 2 (546 aa).

Residues 30–33 (TLGP), lysine 51, 87–91 (DGTTT), glycine 415, 479–481 (NAA), and aspartate 495 contribute to the ATP site. The disordered stretch occupies residues 526–546 (KEDAPMPGGMPGGMGGMGMDM). Positions 534 to 546 (GMPGGMGGMGMDM) are enriched in gly residues.

Belongs to the chaperonin (HSP60) family. As to quaternary structure, forms a cylinder of 14 subunits composed of two heptameric rings stacked back-to-back. Interacts with the co-chaperonin GroES.

The protein localises to the cytoplasm. It carries out the reaction ATP + H2O + a folded polypeptide = ADP + phosphate + an unfolded polypeptide.. In terms of biological role, together with its co-chaperonin GroES, plays an essential role in assisting protein folding. The GroEL-GroES system forms a nano-cage that allows encapsulation of the non-native substrate proteins and provides a physical environment optimized to promote and accelerate protein folding. This chain is Chaperonin GroEL 2, found in Burkholderia lata (strain ATCC 17760 / DSM 23089 / LMG 22485 / NCIMB 9086 / R18194 / 383).